We begin with the raw amino-acid sequence, 189 residues long: HGPRTase-like protein (189 aa).

The protein belongs to the purine/pyrimidine phosphoribosyltransferase family. Archaeal HPRT subfamily.

In terms of biological role, may catalyze a purine salvage reaction, the substrate is unknown. This Halomicrobium mukohataei (strain ATCC 700874 / DSM 12286 / JCM 9738 / NCIMB 13541) (Haloarcula mukohataei) protein is HGPRTase-like protein.